A 1014-amino-acid polypeptide reads, in one-letter code: Valine--tRNA ligase (1014 aa).

A 'HIGH' region motif is present at residues 49–59 (PNVTGSLHMGH). Positions 542–546 (KMSKS) match the 'KMSKS' region motif. Lys-545 contributes to the ATP binding site. Residues 947–1014 (VVDIETLRAK…ILRLRLQTLV (68 aa)) are a coiled coil.

Belongs to the class-I aminoacyl-tRNA synthetase family. ValS type 1 subfamily. As to quaternary structure, monomer.

The protein localises to the cytoplasm. The enzyme catalyses tRNA(Val) + L-valine + ATP = L-valyl-tRNA(Val) + AMP + diphosphate. Functionally, catalyzes the attachment of valine to tRNA(Val). As ValRS can inadvertently accommodate and process structurally similar amino acids such as threonine, to avoid such errors, it has a 'posttransfer' editing activity that hydrolyzes mischarged Thr-tRNA(Val) in a tRNA-dependent manner. This chain is Valine--tRNA ligase, found in Nostoc sp. (strain PCC 7120 / SAG 25.82 / UTEX 2576).